A 282-amino-acid chain; its full sequence is Hydrogenase expression/formation protein HoxQ (282 aa).

This sequence belongs to the HupH/HyaF family.

The polypeptide is Hydrogenase expression/formation protein HoxQ (hoxQ) (Cupriavidus necator (strain ATCC 17699 / DSM 428 / KCTC 22496 / NCIMB 10442 / H16 / Stanier 337) (Ralstonia eutropha)).